The chain runs to 291 residues: Isopentenyl-diphosphate Delta-isomerase I, chloroplastic (291 aa).

The transit peptide at 1–52 directs the protein to the chloroplast; sequence MSTASLFSFPSFHLRSLLPSLSSSSSSSSSRFAPPRLSPIRSPAPRTQLSVR. N-acetylthreonine is present on Ser2. The segment covering 20–39 has biased composition (low complexity); sequence SLSSSSSSSSSRFAPPRLSP. The interval 20–43 is disordered; that stretch reads SLSSSSSSSSSRFAPPRLSPIRSP. A substrate-binding site is contributed by Lys95. Positions 99 and 111 each coordinate Mg(2+). Residues 109 to 261 form the Nudix hydrolase domain; it reads LLHRAFSVFL…AVKLSPWFRL (153 aa). Substrate-binding residues include Arg130 and Lys134. The active site involves Cys146. A substrate-binding site is contributed by Ser147. The short motif at 147–177 is the Nudix box element; sequence SHPLYRESELIEENVLGVRNAAQRKLFDELG. Glu206 and Glu208 together coordinate Mg(2+). Residue Glu208 is part of the active site.

Belongs to the IPP isomerase type 1 family. Requires Mg(2+) as cofactor.

It localises to the plastid. It is found in the chloroplast. The protein localises to the cytoplasm. The enzyme catalyses isopentenyl diphosphate = dimethylallyl diphosphate. It participates in isoprenoid biosynthesis; dimethylallyl diphosphate biosynthesis; dimethylallyl diphosphate from isopentenyl diphosphate: step 1/1. The protein operates within porphyrin-containing compound metabolism; chlorophyll biosynthesis. In terms of biological role, catalyzes the 1,3-allylic rearrangement of the homoallylic substrate isopentenyl (IPP) to its highly electrophilic allylic isomer, dimethylallyl diphosphate (DMAPP). This is Isopentenyl-diphosphate Delta-isomerase I, chloroplastic (IPP1) from Arabidopsis thaliana (Mouse-ear cress).